A 93-amino-acid chain; its full sequence is Putative regulatory protein LBL_1834 (93 aa).

The protein belongs to the RemA family.

The chain is Putative regulatory protein LBL_1834 from Leptospira borgpetersenii serovar Hardjo-bovis (strain L550).